A 282-amino-acid polypeptide reads, in one-letter code: uncharacterized protein (282 aa).

The region spanning 2–78 (TDVLAVIREM…IKIAVSLAKQ (77 aa)) is the HTH rpiR-type domain. A DNA-binding region (H-T-H motif) is located at residues 38–57 (VNELANACDTSEASIIRFCR). Residues 122 to 262 (AAEALANANK…FILVAQKKYN (141 aa)) enclose the SIS domain.

This is an uncharacterized protein from Caldanaerobacter subterraneus subsp. tengcongensis (strain DSM 15242 / JCM 11007 / NBRC 100824 / MB4) (Thermoanaerobacter tengcongensis).